The chain runs to 566 residues: MTKKLTPQEKKNRKPAVRACVFCHQKHLQCSNERPCKNCVKRNIAHGCQDIVRKRVKYLTGESVPGAVSNKQSTPRKKLKTGPVSTSVSPMDSVKSELTTPVESSNHFPPPMSSSVDALPTTQHSAIEIPPNDQPISDILEVPPLFDSSHMISSEAPETNITLTTQNLITPDPLSFHTNTVSNTTTDVLNKLLNDNYETESMLSANNSNGDHLLGMAHTSSGHLSNGQQFQSNYLNEEYMMLGDIILQSKQASPSPSNTSTSENNTNTLSPSSFGYISNINFEDFNQPKRKVVQKLKDSRPFISLGFTADLAPHDNNNNTDYYDDKMTNNITGKTEEGPGNPIINYNTKFTTDYVPPSITNNLYKTASDLYSKELKNFYYPLSYHALTKLLKVIFGGNDLSPEEKQEKRSKLLIILKLIASYRPTFIAAHRDLIQEDLLMLEMTLQRSLLDYKKLAELNSSPTIMWRRTGEIISITEDMALLLEHSSFDLLKERRFIFELMDDNSIVDYFNLFANIAVGNLKSVIQTAIQMKTKSSNLIKFTCVFTIKRDIFDIPMIVIGQFLPIV.

Residues cysteine 20–cysteine 48 constitute a DNA-binding region (zn(2)-C6 fungal-type). 2 disordered regions span residues proline 65–serine 93 and lysine 250–serine 270. Over residues proline 83–serine 93 the composition is skewed to polar residues. The segment covering serine 253–serine 270 has biased composition (low complexity).

It belongs to the ERT1/acuK family.

It is found in the nucleus. Functionally, transcription factor which regulates nonfermentable carbon utilization. This Candida albicans (strain SC5314 / ATCC MYA-2876) (Yeast) protein is Glucose starvation modulator protein 1 (ZCF23).